A 646-amino-acid chain; its full sequence is Acetyl-coenzyme A synthetase (646 aa).

Residues 190–193 (RAGK) and Thr-309 contribute to the CoA site. Residues 385 to 387 (GEP), 409 to 414 (DTWWQT), Asp-498, and Arg-513 each bind ATP. Position 521 (Ser-521) interacts with CoA. Arg-524 provides a ligand contact to ATP. Residues Val-535, His-537, and Val-540 each coordinate Mg(2+). Residue Arg-582 participates in CoA binding. Lys-607 is modified (N6-acetyllysine).

Belongs to the ATP-dependent AMP-binding enzyme family. Mg(2+) is required as a cofactor. Acetylated. Deacetylation by the SIR2-homolog deacetylase activates the enzyme.

It carries out the reaction acetate + ATP + CoA = acetyl-CoA + AMP + diphosphate. Functionally, catalyzes the conversion of acetate into acetyl-CoA (AcCoA), an essential intermediate at the junction of anabolic and catabolic pathways. AcsA undergoes a two-step reaction. In the first half reaction, AcsA combines acetate with ATP to form acetyl-adenylate (AcAMP) intermediate. In the second half reaction, it can then transfer the acetyl group from AcAMP to the sulfhydryl group of CoA, forming the product AcCoA. This Pseudoalteromonas atlantica (strain T6c / ATCC BAA-1087) protein is Acetyl-coenzyme A synthetase.